The primary structure comprises 119 residues: uncharacterized protein (119 aa).

Residues 67-119 (LGLKEVQKKSNEGLNEVQGVADINKQKRPANSQDSSSVEGDIQNFLEKVTGKN) form a disordered region. Over residues 95-104 (PANSQDSSSV) the composition is skewed to polar residues.

This is an uncharacterized protein from Anabaena variabilis.